Here is a 561-residue protein sequence, read N- to C-terminus: Arginine--tRNA ligase (561 aa).

The 'HIGH' region signature appears at 129–139 (ANPTGPLHVGH).

It belongs to the class-I aminoacyl-tRNA synthetase family. In terms of assembly, monomer.

The protein resides in the cytoplasm. It carries out the reaction tRNA(Arg) + L-arginine + ATP = L-arginyl-tRNA(Arg) + AMP + diphosphate. The protein is Arginine--tRNA ligase of Bordetella parapertussis (strain 12822 / ATCC BAA-587 / NCTC 13253).